The chain runs to 573 residues: Squalene monooxygenase (573 aa).

The Cytoplasmic portion of the chain corresponds to 1-19 (MWTFLGIATFTYFYKKCGD). Residues 1 to 99 (MWTFLGIATF…EQLESKRRRK (99 aa)) form an interaction with MARCHF6 region. The stretch at 20-40 (VTLANKELLLCVLVFLSLGLV) is an intramembrane region. The Cytoplasmic portion of the chain corresponds to 41–573 (LSYRCRHRNG…IYSEMKYLVH (533 aa)). Positions 61–72 (QFAAFSDILSAL) are required for degradation in response to high membrane cholesterol levels. Residues 100 to 573 (EVNLSETTLT…IYSEMKYLVH (474 aa)) are sufficient for catalytic activity. FAD contacts are provided by residues 132-133 (VL), 152-153 (ER), Arg-160, Arg-233, Val-249, Asp-407, and Met-420. The hydrophobic; mediates interaction with membranes stretch occupies residues 515 to 573 (PLLLIRHFFSVAVYATYFCFKSEPWATKPRALFSSGAILYKACSIIFPLIYSEMKYLVH).

It belongs to the squalene monooxygenase family. In terms of assembly, interacts (via N-terminal domain) with MARCHF6. Interacts with SMIM22; this interaction modulates lipid droplet formation. It depends on FAD as a cofactor. Ubiquitinated by MARCHF6 in response to high cholesterol levels in intracellular membranes, leading to proteasomal degradation. As to expression, detected in lever (at protein level).

It is found in the microsome membrane. The protein resides in the endoplasmic reticulum membrane. It carries out the reaction squalene + reduced [NADPH--hemoprotein reductase] + O2 = (S)-2,3-epoxysqualene + oxidized [NADPH--hemoprotein reductase] + H2O + H(+). It functions in the pathway terpene metabolism; lanosterol biosynthesis; lanosterol from farnesyl diphosphate: step 2/3. With respect to regulation, inhibited by NB-598 ((E)N-ethyl-N-(6,6-dimethyl-2-hepten-4-ynyl)-3-[(3,3'-bi-thiophen-5-yl)methoxy]benzene-methanamine). Contrary to fungal enzymes, the mammalian enzyme is only slightly inhibited by terbinafine. Functionally, catalyzes the stereospecific oxidation of squalene to (S)-2,3-epoxysqualene, and is considered to be a rate-limiting enzyme in steroid biosynthesis. The polypeptide is Squalene monooxygenase (Sqle) (Rattus norvegicus (Rat)).